Reading from the N-terminus, the 26-residue chain is uncharacterized protein (26 aa).

This is an uncharacterized protein from Escherichia coli (strain K12).